Consider the following 765-residue polypeptide: MASALRQEGLTQEDYIEIQRRLGRDPNRAELGMFGVMWSEHCCYRNSRPLLRGFPTDGPRILVGPGENAGVVDLGEGHRLAFKIESHNHPSAVEPFQGAATGVGGILRDIFTMGARPIALLNALRFGPLDEPATQGLVEGVVAGISHYGNCVGVPTVGGEVAFDPAYRGNPLVNAMALGLMETDDIVKSGASGVGNPVVYVGSTTGRDGMGGASFASAELSADSLDDRPAVQVGDPFLEKGLIEACLEAFQSGDVVAAQDMGAAGLTCSCSEMAAKGNVGVELDLDRVPAREQGMTAYEFLLSESQERMLFVVQAGREEALMQRFRRWGLQAAVVGQVLEEPVVRVLQHGSVAAEVPARALAEDTPINQHTLISEPPEDIQEHWRWSETDLPSVSRDHDWGADLLALLDDPTIASKRWVYRQYDQQVLANTVVPAGGADAAVVRLRPQQGDASLRGANRGVAATVDCPNRWVALDPERGAMAAVAEAARNLSCVGAVPVAVTDNLNFPSPETPKGYWQLAMACRGLSEGCRVLGTPVTGGNVSLYNETRADDGSLQPIHPTPVVGMVGLVEDLGRVGGLAWRQAGDAVVLLGVSSDERQDDRVGLAGSSYQGVIHGLLTGRPPRVDLDLEQRVQALVRQAWEQGLLASAHDSSDGGLAVALAECSIASGLGVDGALPGDGVAPERRLFAEGGARIVVSVRAECMDAWTSLLADEAHAAVPVTILGAVADHGRFRLSLGSQPVLDQAVQTLTERFDQALPRRLGTA.

The active site involves H41. ATP is bound by residues Y44 and K83. E85 contributes to the Mg(2+) binding site. Substrate-binding positions include 86–89 and R108; that span reads SHNH. H87 acts as the Proton acceptor in catalysis. Residue D109 participates in Mg(2+) binding. Residue Q232 participates in substrate binding. Position 260 (D260) interacts with Mg(2+). 304–306 serves as a coordination point for substrate; sequence ESQ. ATP-binding residues include D503 and G540. N541 contacts Mg(2+). Substrate is bound at residue S543.

Belongs to the FGAMS family. In terms of assembly, monomer. Part of the FGAM synthase complex composed of 1 PurL, 1 PurQ and 2 PurS subunits.

It localises to the cytoplasm. The enzyme catalyses N(2)-formyl-N(1)-(5-phospho-beta-D-ribosyl)glycinamide + L-glutamine + ATP + H2O = 2-formamido-N(1)-(5-O-phospho-beta-D-ribosyl)acetamidine + L-glutamate + ADP + phosphate + H(+). It functions in the pathway purine metabolism; IMP biosynthesis via de novo pathway; 5-amino-1-(5-phospho-D-ribosyl)imidazole from N(2)-formyl-N(1)-(5-phospho-D-ribosyl)glycinamide: step 1/2. In terms of biological role, part of the phosphoribosylformylglycinamidine synthase complex involved in the purines biosynthetic pathway. Catalyzes the ATP-dependent conversion of formylglycinamide ribonucleotide (FGAR) and glutamine to yield formylglycinamidine ribonucleotide (FGAM) and glutamate. The FGAM synthase complex is composed of three subunits. PurQ produces an ammonia molecule by converting glutamine to glutamate. PurL transfers the ammonia molecule to FGAR to form FGAM in an ATP-dependent manner. PurS interacts with PurQ and PurL and is thought to assist in the transfer of the ammonia molecule from PurQ to PurL. This is Phosphoribosylformylglycinamidine synthase subunit PurL from Synechococcus sp. (strain WH7803).